The chain runs to 925 residues: Translation initiation factor IF-2 (925 aa).

Residues 190–329 (PAAPTSEAAP…RRRDEREAAV (140 aa)) are disordered. Composition is skewed to pro residues over residues 199-209 (PPEPEPTPLPA), 217-238 (PVRP…PAPR), and 279-288 (RPVPAQPAPQ). A compositionally biased stretch (low complexity) spans 289 to 307 (TPTRSGSGIAKKGAITKAG). Residues 320–329 (RRRDEREAAV) are compositionally biased toward basic and acidic residues. Residues 417–589 (VRPPVVTIMG…LLLVADYELE (173 aa)) form the tr-type G domain. The interval 426 to 433 (GHVDHGKT) is G1. Residue 426–433 (GHVDHGKT) coordinates GTP. Residues 451-455 (GITQH) form a G2 region. The G3 stretch occupies residues 476–479 (DTPG). Residues 476–480 (DTPGH) and 530–533 (NKVD) each bind GTP. The interval 530–533 (NKVD) is G4. The G5 stretch occupies residues 566-568 (SAK).

Belongs to the TRAFAC class translation factor GTPase superfamily. Classic translation factor GTPase family. IF-2 subfamily.

It localises to the cytoplasm. In terms of biological role, one of the essential components for the initiation of protein synthesis. Protects formylmethionyl-tRNA from spontaneous hydrolysis and promotes its binding to the 30S ribosomal subunits. Also involved in the hydrolysis of GTP during the formation of the 70S ribosomal complex. In Gloeobacter violaceus (strain ATCC 29082 / PCC 7421), this protein is Translation initiation factor IF-2.